A 328-amino-acid chain; its full sequence is Delta-aminolevulinic acid dehydratase (328 aa).

The active-site Schiff-base intermediate with substrate is Lys-200. Residues Arg-210 and Lys-222 each contribute to the 5-aminolevulinate site. Glu-238 lines the Mg(2+) pocket. Lys-253 (schiff-base intermediate with substrate) is an active-site residue. 5-aminolevulinate contacts are provided by Ser-279 and Tyr-318.

It belongs to the ALAD family. As to quaternary structure, homooctamer.

The catalysed reaction is 2 5-aminolevulinate = porphobilinogen + 2 H2O + H(+). The protein operates within porphyrin-containing compound metabolism; protoporphyrin-IX biosynthesis; coproporphyrinogen-III from 5-aminolevulinate: step 1/4. Its activity is regulated as follows. Stimulated by magnesium, inhibited by zinc. Its function is as follows. Catalyzes an early step in the biosynthesis of tetrapyrroles. Binds two molecules of 5-aminolevulinate per subunit, each at a distinct site, and catalyzes their condensation to form porphobilinogen. The polypeptide is Delta-aminolevulinic acid dehydratase (hemB) (Chlorobaculum tepidum (strain ATCC 49652 / DSM 12025 / NBRC 103806 / TLS) (Chlorobium tepidum)).